Reading from the N-terminus, the 177-residue chain is Disulfide bond formation protein B (177 aa).

At 1 to 14 the chain is on the cytoplasmic side; that stretch reads MLALLKQFSEKRFV. Residues 15–31 form a helical membrane-spanning segment; sequence WFLLAFSSLALESTALY. At 32–49 the chain is on the periplasmic side; that stretch reads FQYGMGLQPCVLCVYERL. Cys-41 and Cys-44 are oxidised to a cystine. Residues 50 to 65 traverse the membrane as a helical segment; it reads AMIGLFVAGTIALLQP. At 66-72 the chain is on the cytoplasmic side; the sequence is RVFILRL. The helical transmembrane segment at 73-90 threads the bilayer; sequence IALALGLFSSIKGLLISF. Topologically, residues 91 to 145 are periplasmic; sequence RHLDLQMNPAPWKQCEFIPNFPETLPFHQWFPFIFNPTGSCNESQWSLFGLTMVQ. Cysteines 105 and 131 form a disulfide. Residues 146-164 traverse the membrane as a helical segment; sequence WLVVIFSLYVVILTLLLIA. At 165 to 177 the chain is on the cytoplasmic side; it reads QVIKTRKQRRLFN.

It belongs to the DsbB family.

It is found in the cell inner membrane. In terms of biological role, required for disulfide bond formation in some periplasmic proteins. Acts by oxidizing the DsbA protein. The sequence is that of Disulfide bond formation protein B from Haemophilus influenzae (strain ATCC 51907 / DSM 11121 / KW20 / Rd).